A 463-amino-acid polypeptide reads, in one-letter code: tRNA (guanine(10)-N(2))-methyltransferase TRMT11 (463 aa).

Ala2 bears the N-acetylalanine mark.

The protein belongs to the class I-like SAM-binding methyltransferase superfamily. TRM11 methyltransferase family. Part of the heterodimeric TRMT11-TRM112 methyltransferase complex; this complex forms an active tRNA methyltransferase, where TRMT112 acts as an activator of the catalytic subunit TRMT11.

The protein localises to the cytoplasm. The enzyme catalyses guanosine(10) in tRNA + S-adenosyl-L-methionine = N(2)-methylguanosine(10) in tRNA + S-adenosyl-L-homocysteine + H(+). Its function is as follows. Catalytic subunit of the TRMT11-TRM112 methyltransferase complex, that specifically mediates the S-adenosyl-L-methionine-dependent N(2)-methylation of guanosine nucleotide at position 10 (m2G10) in tRNAs. This is one of the major tRNA (guanine-N(2))-methyltransferases. This chain is tRNA (guanine(10)-N(2))-methyltransferase TRMT11, found in Pongo abelii (Sumatran orangutan).